Here is a 73-residue protein sequence, read N- to C-terminus: Venom peptide La1 (73 aa).

At lysine 73 the chain carries Lysine amide.

Belongs to the scorpion La1-like peptide family. Post-translationally, contains 4 disulfide bonds. Expressed by the venom gland.

It is found in the secreted. In terms of biological role, not toxic to insect. This chain is Venom peptide La1, found in Liocheles australasiae (Dwarf wood scorpion).